The chain runs to 561 residues: Dihydroxy-acid dehydratase (561 aa).

C50 provides a ligand contact to [2Fe-2S] cluster. D82 contributes to the Mg(2+) binding site. [2Fe-2S] cluster is bound at residue C123. Mg(2+) is bound by residues D124 and K125. The residue at position 125 (K125) is an N6-carboxylysine. C195 lines the [2Fe-2S] cluster pocket. E447 is a Mg(2+) binding site. S473 acts as the Proton acceptor in catalysis.

Belongs to the IlvD/Edd family. In terms of assembly, homodimer. The cofactor is [2Fe-2S] cluster. Mg(2+) is required as a cofactor.

The enzyme catalyses (2R)-2,3-dihydroxy-3-methylbutanoate = 3-methyl-2-oxobutanoate + H2O. It carries out the reaction (2R,3R)-2,3-dihydroxy-3-methylpentanoate = (S)-3-methyl-2-oxopentanoate + H2O. It participates in amino-acid biosynthesis; L-isoleucine biosynthesis; L-isoleucine from 2-oxobutanoate: step 3/4. The protein operates within amino-acid biosynthesis; L-valine biosynthesis; L-valine from pyruvate: step 3/4. In terms of biological role, functions in the biosynthesis of branched-chain amino acids. Catalyzes the dehydration of (2R,3R)-2,3-dihydroxy-3-methylpentanoate (2,3-dihydroxy-3-methylvalerate) into 2-oxo-3-methylpentanoate (2-oxo-3-methylvalerate) and of (2R)-2,3-dihydroxy-3-methylbutanoate (2,3-dihydroxyisovalerate) into 2-oxo-3-methylbutanoate (2-oxoisovalerate), the penultimate precursor to L-isoleucine and L-valine, respectively. This is Dihydroxy-acid dehydratase from Crocosphaera subtropica (strain ATCC 51142 / BH68) (Cyanothece sp. (strain ATCC 51142)).